Here is a 355-residue protein sequence, read N- to C-terminus: tRNA-specific 2-thiouridylase MnmA 1 (355 aa).

An ATP-binding site is contributed by 6–13 (LLSGGVDS). Residues 92–94 (NPD) are interaction with target base in tRNA. Cys-97 serves as the catalytic Nucleophile. A disulfide bond links Cys-97 and Cys-192. An ATP-binding site is contributed by Gly-120. An interaction with tRNA region spans residues 142–144 (KDQ). The Cysteine persulfide intermediate role is filled by Cys-192.

This sequence belongs to the MnmA/TRMU family.

It localises to the cytoplasm. It carries out the reaction S-sulfanyl-L-cysteinyl-[protein] + uridine(34) in tRNA + AH2 + ATP = 2-thiouridine(34) in tRNA + L-cysteinyl-[protein] + A + AMP + diphosphate + H(+). In terms of biological role, catalyzes the 2-thiolation of uridine at the wobble position (U34) of tRNA, leading to the formation of s(2)U34. The protein is tRNA-specific 2-thiouridylase MnmA 1 of Bacteroides thetaiotaomicron (strain ATCC 29148 / DSM 2079 / JCM 5827 / CCUG 10774 / NCTC 10582 / VPI-5482 / E50).